The primary structure comprises 652 residues: Acetyl-coenzyme A synthetase (652 aa).

Residues 191–194, Thr311, and Asn335 each bind CoA; that span reads RAGR. Residues 387–389, 411–416, Asp500, and Arg515 contribute to the ATP site; these read GEP and DTWWQT. A CoA-binding site is contributed by Ser523. Arg526 serves as a coordination point for ATP. Residues Val537, His539, and Ile542 each coordinate Mg(2+). Arg584 lines the CoA pocket. Residue Lys609 is modified to N6-acetyllysine.

It belongs to the ATP-dependent AMP-binding enzyme family. The cofactor is Mg(2+). Post-translationally, acetylated. Deacetylation by the SIR2-homolog deacetylase activates the enzyme.

It carries out the reaction acetate + ATP + CoA = acetyl-CoA + AMP + diphosphate. Catalyzes the conversion of acetate into acetyl-CoA (AcCoA), an essential intermediate at the junction of anabolic and catabolic pathways. Acs undergoes a two-step reaction. In the first half reaction, Acs combines acetate with ATP to form acetyl-adenylate (AcAMP) intermediate. In the second half reaction, it can then transfer the acetyl group from AcAMP to the sulfhydryl group of CoA, forming the product AcCoA. Its function is as follows. Enables the cell to use acetate during aerobic growth to generate energy via the TCA cycle, and biosynthetic compounds via the glyoxylate shunt. Acetylates CheY, the response regulator involved in flagellar movement and chemotaxis. This Yersinia pestis protein is Acetyl-coenzyme A synthetase.